The primary structure comprises 186 residues: Ribosome-recycling factor (186 aa).

Belongs to the RRF family.

It is found in the cytoplasm. Functionally, responsible for the release of ribosomes from messenger RNA at the termination of protein biosynthesis. May increase the efficiency of translation by recycling ribosomes from one round of translation to another. In Albidiferax ferrireducens (strain ATCC BAA-621 / DSM 15236 / T118) (Rhodoferax ferrireducens), this protein is Ribosome-recycling factor.